A 620-amino-acid chain; its full sequence is Chaperone protein HscA homolog (620 aa).

The protein belongs to the heat shock protein 70 family.

Functionally, chaperone involved in the maturation of iron-sulfur cluster-containing proteins. Has a low intrinsic ATPase activity which is markedly stimulated by HscB. The chain is Chaperone protein HscA homolog from Shewanella sp. (strain MR-7).